We begin with the raw amino-acid sequence, 321 residues long: MTQTAAQQPSPRLVSGHGLATTAADGAVLDVWFPAPVAGPLSAADASLRDTLRALAADDADRGTTQAVVELEVDLDAAPASTADAWLRLHALSHRLARPNELNLDGVFGLLTNVVWTNHGPCAVADFELTRARLRARGAVQVYGVDKFPRMTDYVVPSGVRIGDADRVRLGAHLAEGTTVMHEGFVNFNAGTLGNSMVEGRISAGVVVGDGSDVGGGASIMGTLSGGGTQRIVVGEHVLLGANSGVGISVGDDCVVEAGLYVTAGTRVSVLQDGEAAHTVKAVDLSGVPNLLFRRNSTTGGVEALPRAGRTVELNAALHAN.

Asp-166 and Glu-183 together coordinate Mg(2+). Residue Glu-199 is the Acyl-anhydride intermediate of the active site. Residues Arg-201, Gly-216, Ser-219, Ala-242, 257-258, Gly-265, Lys-281, and 294-297 each bind succinyl-CoA; these read EA and RRNS.

Belongs to the type 2 tetrahydrodipicolinate N-succinyltransferase family. As to quaternary structure, homotrimer.

The protein resides in the cytoplasm. The catalysed reaction is (S)-2,3,4,5-tetrahydrodipicolinate + succinyl-CoA + H2O = (S)-2-succinylamino-6-oxoheptanedioate + CoA. It functions in the pathway amino-acid biosynthesis; L-lysine biosynthesis via DAP pathway; LL-2,6-diaminopimelate from (S)-tetrahydrodipicolinate (succinylase route): step 1/3. Catalyzes the conversion of the cyclic tetrahydrodipicolinate (THDP) into the acyclic N-succinyl-L-2-amino-6-oxopimelate using succinyl-CoA. The protein is 2,3,4,5-tetrahydropyridine-2,6-dicarboxylate N-succinyltransferase of Micrococcus luteus (strain ATCC 4698 / DSM 20030 / JCM 1464 / CCM 169 / CCUG 5858 / IAM 1056 / NBRC 3333 / NCIMB 9278 / NCTC 2665 / VKM Ac-2230) (Micrococcus lysodeikticus).